A 307-amino-acid chain; its full sequence is Secondary metabolism regulator LAE1 (307 aa).

Belongs to the methyltransferase superfamily. LaeA methyltransferase family. As to quaternary structure, component of the heterotrimeric velvet complex composed of LAE1, VEL1 and VEL2; VEL1 acting as a bridging protein between LAE1 and VEL2.

It localises to the nucleus. The catalysed reaction is L-methionyl-[protein] + S-adenosyl-L-methionine = S-methyl-L-methionyl-[protein] + S-adenosyl-L-homocysteine. Functionally, methyltransferase that performs automethylation. No other methyl-accepting substrate has been identified yet. Component of the velvet transcription factor complex that acts as a global regulator for secondary metabolite gene expression. Controls the expression of the T-toxin gene cluster. Promotes oxidative stress tolerance and acts as a virulence factors during infection. Negatively regulate mycelial pigmentation and controls sexual development, as well as asexual development during vegetative growth. The sequence is that of Secondary metabolism regulator LAE1 from Cochliobolus heterostrophus (strain C5 / ATCC 48332 / race O) (Southern corn leaf blight fungus).